Reading from the N-terminus, the 417-residue chain is WD repeat and FYVE domain-containing protein 2 (417 aa).

WD repeat units follow at residues 29–68 (GHVA…QFWP), 119–157 (CHAG…NKVG), 202–241 (AHTN…GEAY), and 245–284 (GHNG…VETP). The FYVE-type zinc finger occupies 286–357 (WKTSDCCQKC…ICNDCAGRMK (72 aa)). 8 residues coordinate Zn(2+): C292, C295, C319, C322, C327, C330, C349, and C352. The WD 5 repeat unit spans residues 373-412 (EIRTGITAMHLQETLGLLVTSGQNRVVMIWDVRSVCSAPS).

Functionally, plays a role in coelomocyte endocytosis. In Caenorhabditis briggsae, this protein is WD repeat and FYVE domain-containing protein 2.